Reading from the N-terminus, the 603-residue chain is MANMTPRKNSVTRLIAPVALALTLAACSSSPKAPDRLDITQSPTETSNAYILKADQQQGALEADFLIMALKAAVQEQNFDLADKLFTRLATMQLSPAQTAEMQLAHAKMLKSQSQYEDALKTLNFEAWWKLENSQWVEYHKLRHELYLLSGDNLNSARELIELEPFTAEDQKAQLWTQVWTSVSSLNSTALEEVKLDETETNLHGWVQLATYLDTLKHSPMRLQETLNEWLLANPTHPAATYTPQVILDILALEIVRPENVALLLPLSGRFGPQGIRVRDGFINAMMEDKERDEFTKLKVIDTQATSMAEIMTTLEKEQIQFVVGPLVRSKIEEFQSLNSTEIAQLALNIPSEIDTDINSCYFTLSPEQEAEQAAVHLFKQGFKHPLYLAPQGTMGERLSQAFSDKWFQLTAKRPSISYFGSKAQLQQKVNSVFGIESSQARIYQMNALASMELEAQPRSRRDIDAVYMVAKSSELVLLKPFIEVAINPGIKPPKLYASSRSNSGRQTQLVEIKGIEFSDIPLLTNENHSFKAQYDELWPKSSNGETRLHALGMDAYQLVAELPQMKAVDNYRMEGKTGELSLNQECVIQRKMSWAVHGEETE.

The N-terminal stretch at 1 to 26 is a signal peptide; sequence MANMTPRKNSVTRLIAPVALALTLAA. Cys-27 is lipidated: N-palmitoyl cysteine. A lipid anchor (S-diacylglycerol cysteine) is attached at Cys-27.

The protein belongs to the LpoA family. In terms of assembly, interacts with PBP1a.

The protein resides in the cell outer membrane. Regulator of peptidoglycan synthesis that is essential for the function of penicillin-binding protein 1A (PBP1a). This is Penicillin-binding protein activator LpoA from Aliivibrio fischeri (strain ATCC 700601 / ES114) (Vibrio fischeri).